Consider the following 296-residue polypeptide: Acetylglutamate kinase (296 aa).

Substrate is bound by residues 67-68 (GG), Arg-89, and Asn-194.

It belongs to the acetylglutamate kinase family. ArgB subfamily.

The protein localises to the cytoplasm. The catalysed reaction is N-acetyl-L-glutamate + ATP = N-acetyl-L-glutamyl 5-phosphate + ADP. It functions in the pathway amino-acid biosynthesis; L-arginine biosynthesis; N(2)-acetyl-L-ornithine from L-glutamate: step 2/4. In terms of biological role, catalyzes the ATP-dependent phosphorylation of N-acetyl-L-glutamate. This is Acetylglutamate kinase from Syntrophus aciditrophicus (strain SB).